The primary structure comprises 76 residues: MDFKRVKEYFAWLYYQYQIITCCAVMEPWEQSMLNTIILTIVAMVVYTAYVFIPIHIRLAWEFFSKICGYDSSISN.

Residues 1–11 (MDFKRVKEYFA) are Cytoplasmic-facing. A helical membrane pass occupies residues 12 to 29 (WLYYQYQIITCCAVMEPW). The Lumenal segment spans residues 30-36 (EQSMLNT). Residues 37–57 (IILTIVAMVVYTAYVFIPIHI) traverse the membrane as a helical segment. The Cytoplasmic portion of the chain corresponds to 58-76 (RLAWEFFSKICGYDSSISN).

This sequence belongs to the SPTSS family. SPTSSB subfamily. As to quaternary structure, component of the serine palmitoyltransferase (SPT) complex, which is composed of SPTLC1, SPTLC2 or SPTLC3 and SPTSSA or SPTSSB. The heterodimer consisting of SPTLC1 and SPTLC2/SPTLC3 forms the catalytic core of the enzyme, while SPTSSA or SPTSSB subunits determine substrate specificity. SPT also interacts with ORMDL proteins, especially ORMDL3, which negatively regulate SPT activity in the presence of ceramides. In terms of tissue distribution, expression is strong in hypogonadal (hpg) mouse prostate, weak in mature castrated mouse prostate and absent in normal intact or androgen-replaced hpg mouse prostates.

It localises to the endoplasmic reticulum membrane. Its pathway is lipid metabolism; sphingolipid metabolism. In terms of biological role, component of the serine palmitoyltransferase multisubunit enzyme (SPT) that catalyzes the initial and rate-limiting step in sphingolipid biosynthesis by condensing L-serine and activated acyl-CoA (most commonly palmitoyl-CoA) to form long-chain bases. The SPT complex is composed of SPTLC1, SPTLC2 or SPTLC3 and SPTSSA or SPTSSB. Within this complex, the heterodimer consisting of SPTLC1 and SPTLC2/SPTLC3 forms the catalytic core. Within the SPT complex, SPTSSB stimulates the catalytic activity and plays a role in substrate specificity. SPT complexes with this subunit showing a preference for longer acyl-CoAs. The SPTLC1-SPTLC2-SPTSSB complex shows a strong preference for C18-CoA substrate, while the SPTLC1-SPTLC3-SPTSSB isozyme displays an ability to use a broader range of acyl-CoAs, without apparent preference. The protein is Serine palmitoyltransferase small subunit B (Sptssb) of Mus musculus (Mouse).